The following is a 159-amino-acid chain: Phosphopantetheine adenylyltransferase (159 aa).

T10 is a binding site for substrate. ATP contacts are provided by residues 10-11 (TF) and H18. Substrate-binding residues include K42, M74, and R88. ATP-binding positions include 89–91 (GLR), E99, and 124–130 (WSFISSS).

The protein belongs to the bacterial CoaD family. Homohexamer. It depends on Mg(2+) as a cofactor.

The protein localises to the cytoplasm. The catalysed reaction is (R)-4'-phosphopantetheine + ATP + H(+) = 3'-dephospho-CoA + diphosphate. Its pathway is cofactor biosynthesis; coenzyme A biosynthesis; CoA from (R)-pantothenate: step 4/5. In terms of biological role, reversibly transfers an adenylyl group from ATP to 4'-phosphopantetheine, yielding dephospho-CoA (dPCoA) and pyrophosphate. The chain is Phosphopantetheine adenylyltransferase from Escherichia fergusonii (strain ATCC 35469 / DSM 13698 / CCUG 18766 / IAM 14443 / JCM 21226 / LMG 7866 / NBRC 102419 / NCTC 12128 / CDC 0568-73).